We begin with the raw amino-acid sequence, 796 residues long: Probable phosphoketolase (796 aa).

It belongs to the XFP family. It depends on thiamine diphosphate as a cofactor.

The chain is Probable phosphoketolase from Synechococcus elongatus (strain ATCC 33912 / PCC 7942 / FACHB-805) (Anacystis nidulans R2).